Consider the following 148-residue polypeptide: Calmodulin-related protein 97A (148 aa).

EF-hand domains follow at residues 7 to 42, 43 to 78, 80 to 115, and 116 to 148; these read EQIA…LGQN, PTEA…QMRE, DTEE…LGEK, and VTDE…ISQK. Positions 20, 24, 26, 31, 58, 60, 62, 67, 93, 95, 97, 104, 129, 131, 133, 135, and 140 each coordinate Ca(2+).

The protein belongs to the calmodulin family.

Its function is as follows. May be involved in calcium-mediated signal transduction. The polypeptide is Calmodulin-related protein 97A (Acam) (Drosophila melanogaster (Fruit fly)).